The sequence spans 121 residues: Flagellar protein FliT (121 aa).

The interval 1–50 (MNNAPHLYFAWQQLVEKSQLMLRLATEEQWDELIASEMAYVNAVQEIAHL) is required for homodimerization. The segment at 60 to 98 (MQEQLRPMLRLILDNESKVKQLLQIRMDELAKLVGQSSV) is fliD binding.

It belongs to the FliT family. In terms of assembly, homodimer. Interacts with FliD and FlhC.

The protein localises to the cytoplasm. It is found in the cytosol. Its function is as follows. Dual-function protein that regulates the transcription of class 2 flagellar operons and that also acts as an export chaperone for the filament-capping protein FliD. As a transcriptional regulator, acts as an anti-FlhDC factor; it directly binds FlhC, thus inhibiting the binding of the FlhC/FlhD complex to class 2 promoters, resulting in decreased expression of class 2 flagellar operons. As a chaperone, effects FliD transition to the membrane by preventing its premature polymerization, and by directing it to the export apparatus. The protein is Flagellar protein FliT of Escherichia coli O9:H4 (strain HS).